Consider the following 208-residue polypeptide: Segregation and condensation protein B (208 aa).

The protein belongs to the ScpB family. Homodimer. Homodimerization may be required to stabilize the binding of ScpA to the Smc head domains. Component of a cohesin-like complex composed of ScpA, ScpB and the Smc homodimer, in which ScpA and ScpB bind to the head domain of Smc. The presence of the three proteins is required for the association of the complex with DNA.

Its subcellular location is the cytoplasm. Its function is as follows. Participates in chromosomal partition during cell division. May act via the formation of a condensin-like complex containing Smc and ScpA that pull DNA away from mid-cell into both cell halves. The chain is Segregation and condensation protein B from Mycoplasma pneumoniae (strain ATCC 29342 / M129 / Subtype 1) (Mycoplasmoides pneumoniae).